Here is a 920-residue protein sequence, read N- to C-terminus: Glutamate receptor 2.2 (920 aa).

A signal peptide spans 1 to 24; the sequence is MKNSKLFFRFLFLFFFFCLESSRG. Residues 25 to 580 are Extracellular-facing; that stretch reads QDNGKTQVNI…DKFSFLKPLS (556 aa). 7 N-linked (GlcNAc...) asparagine glycosylation sites follow: Asn53, Asn204, Asn267, Asn331, Asn342, Asn477, and Asn542. A helical membrane pass occupies residues 581–601; that stretch reads IELWLTTLVFFFLVGISVWTL. Residues 602–610 lie on the Cytoplasmic side of the membrane; it reads EHRVNSDFR. A helical transmembrane segment spans residues 611–631; it reads GPANYQASTIFWFAFSTMVFA. At 632–635 the chain is on the cytoplasmic side; the sequence is PRER. Residues 636 to 656 form a helical membrane-spanning segment; the sequence is VLSFGARSLVVTWYFVLLVLT. The Extracellular portion of the chain corresponds to 657–830; that stretch reads QSYTASLASL…VTAIQLGVGS (174 aa). N-linked (GlcNAc...) asparagine glycosylation occurs at Asn702. The helical transmembrane segment at 831–851 threads the bilayer; sequence FWFLFLVVFVVCVLALGKFTF. The Cytoplasmic segment spans residues 852–920; sequence CFLWKTKGKD…QVNQTDPDCL (69 aa).

The protein belongs to the glutamate-gated ion channel (TC 1.A.10.1) family. In terms of assembly, may form heteromers. In terms of tissue distribution, expressed predominantly in roots.

It is found in the membrane. Its function is as follows. Glutamate-gated receptor that probably acts as a non-selective cation channel. May be involved in light-signal transduction and calcium homeostasis via the regulation of calcium influx into cells. This chain is Glutamate receptor 2.2 (GLR2.2), found in Arabidopsis thaliana (Mouse-ear cress).